Consider the following 510-residue polypeptide: Inositol-3-phosphate synthase (510 aa).

The NAD(+) site is built by glycine 70, glycine 71, asparagine 72, asparagine 73, aspartate 143, isoleucine 180, glutamine 190, arginine 193, threonine 230, alanine 231, asparagine 232, threonine 233, glycine 281, serine 282, aspartate 306, serine 309, asparagine 340, asparagine 341, aspartate 342, lysine 355, glycine 393, aspartate 394, aspartate 422, and serine 423.

The protein belongs to the myo-inositol 1-phosphate synthase family. NAD(+) serves as cofactor.

It is found in the cytoplasm. It localises to the cytosol. Its subcellular location is the nucleus. It carries out the reaction D-glucose 6-phosphate = 1D-myo-inositol 3-phosphate. It participates in polyol metabolism; myo-inositol biosynthesis; myo-inositol from D-glucose 6-phosphate: step 1/2. Key enzyme in myo-inositol biosynthesis pathway that catalyzes the conversion of glucose 6-phosphate to 1-myo-inositol 1-phosphate in a NAD-dependent manner. This is Inositol-3-phosphate synthase (INPS1) from Nicotiana paniculata.